Reading from the N-terminus, the 389-residue chain is 26S proteasome regulatory subunit 10B (389 aa).

Residue K72 is modified to N6-acetyllysine. 174 to 181 (GPPGTGKT) lines the ATP pocket. K206 is modified (N6-acetyllysine). At S244 the chain carries Phosphoserine.

The protein belongs to the AAA ATPase family. As to quaternary structure, component of the 19S proteasome regulatory particle complex. The 26S proteasome consists of a 20S core particle (CP) and two 19S regulatory subunits (RP). The regulatory particle is made of a lid composed of 9 subunits, a base containing 6 ATPases including PSMC6 and few additional components. Interacts with PAAF1.

It localises to the cytoplasm. The protein localises to the nucleus. In terms of biological role, component of the 26S proteasome, a multiprotein complex involved in the ATP-dependent degradation of ubiquitinated proteins. This complex plays a key role in the maintenance of protein homeostasis by removing misfolded or damaged proteins, which could impair cellular functions, and by removing proteins whose functions are no longer required. Therefore, the proteasome participates in numerous cellular processes, including cell cycle progression, apoptosis, or DNA damage repair. PSMC6 belongs to the heterohexameric ring of AAA (ATPases associated with diverse cellular activities) proteins that unfolds ubiquitinated target proteins that are concurrently translocated into a proteolytic chamber and degraded into peptides. In Homo sapiens (Human), this protein is 26S proteasome regulatory subunit 10B (PSMC6).